The primary structure comprises 432 residues: MAKNVVVIGAQWGDEGKGKIVDWLAEEAGGVVRFQGGHNAGHTLVVGGKKTILRLIPSGILHESLDCFIGSGVVVSPEALLGEIDELNAAGVKNVEGRLKIAPTCPLILPYHIALDQAREASRGKGKIGTTGRGIGPAYEDKVARRAIRAADLLHPEKLREKLDAVLAYYNVQLQHLHNAEPVKAEDVMAVIEKVAPRIAPMITDVSRVLNEKNKNGEKLLFEGAQGALLDIDYGTYPFVTSSNCLAGAASAGAGVGPQMLDYVLGIVKAYTTRVGSGPFPTELFDEVGAGLAERGHEFGSVTGRARRCGWFDAAALKRSIQINGISGMCITKLDVMDGVETINICVGYELPDGGKTDILPCGSDAVETCKPIYETMEGWKESTFGIKNYEELPDNAKAYLKRIEEVCGAPVAIVSTGPDREETIVLHHPFA.

Residues 13-19 (GDEGKGK) and 41-43 (GHT) contribute to the GTP site. D14 (proton acceptor) is an active-site residue. D14 and G41 together coordinate Mg(2+). IMP-binding positions include 14–17 (DEGK), 39–42 (NAGH), T131, R145, Q226, T241, and R305. H42 serves as the catalytic Proton donor. 301–307 (SVTGRAR) contributes to the substrate binding site. Residues R307, 333 to 335 (KLD), and 416 to 418 (STG) each bind GTP.

It belongs to the adenylosuccinate synthetase family. Homodimer. It depends on Mg(2+) as a cofactor.

The protein localises to the cytoplasm. It catalyses the reaction IMP + L-aspartate + GTP = N(6)-(1,2-dicarboxyethyl)-AMP + GDP + phosphate + 2 H(+). Its pathway is purine metabolism; AMP biosynthesis via de novo pathway; AMP from IMP: step 1/2. Plays an important role in the de novo pathway of purine nucleotide biosynthesis. Catalyzes the first committed step in the biosynthesis of AMP from IMP. In Neisseria meningitidis serogroup C (strain 053442), this protein is Adenylosuccinate synthetase.